Here is a 248-residue protein sequence, read N- to C-terminus: 14-3-3-like protein G-BOX factor 14 lambda (248 aa).

Ser70, Ser112, and Ser193 each carry phosphoserine; by CRPK1. A Phosphothreonine; by CRPK1 modification is found at Thr214.

This sequence belongs to the 14-3-3 family. In terms of assembly, interacts with SERK1 in the cell membrane. Component of the SERK1 signaling complex, composed of KAPP, CDC48A, GRF6 or GRF7, SERK1, SERK2, SERK3/BAK1 and BRI1. Interacts with TPK1. Interacts with ADF1. Binds to CRPK1 at the plasma membrane. Interacts with DREB1A and DREB1B in the nucleus when activated by CRPK1-mediated phosphorylation upon freezing. Interacts with CINV1. Binds to the N-terminal region of B1L. Transphosphorylated by SERK1. Post-translationally, phosphorylated by CRPK1 in response to cold.

It is found in the nucleus. Its subcellular location is the cell membrane. It localises to the cytoplasm. Its function is as follows. Is associated with a DNA binding complex that binds to the G box, a well-characterized cis-acting DNA regulatory element found in plant genes. Specific negative regulator of slow-vacuolar (SV) ion channel. Mediates F-actin dynamics possibly through inhibiting ADF1 phosphorylation. Negative regulator of freezing tolerance that modulates cold-responsive C-repeat-binding factors (CBF) DREB1A and DREB1B proteins stability by facilitating their ubiquitin-mediated degradation when activated by CRPK1-mediated phosphorylation in freezing conditions; this processus is counteracted by B1L. This chain is 14-3-3-like protein G-BOX factor 14 lambda, found in Arabidopsis thaliana (Mouse-ear cress).